The following is a 189-amino-acid chain: Holliday junction branch migration complex subunit RuvA (189 aa).

Residues 1–62 (MIVALKGNIE…EEAWSLYGFA (62 aa)) form a domain I region. A domain II region spans residues 63-138 (EEAEKRVFDT…FSLSLQEGSK (76 aa)). Residues 138-139 (KA) are flexible linker. Residues 140 to 189 (STPPVFEESRLALESLGFKSELIAKALQNIQATTTQEIIKEALKKLQTLR) are domain III.

It belongs to the RuvA family. As to quaternary structure, homotetramer. Forms an RuvA(8)-RuvB(12)-Holliday junction (HJ) complex. HJ DNA is sandwiched between 2 RuvA tetramers; dsDNA enters through RuvA and exits via RuvB. An RuvB hexamer assembles on each DNA strand where it exits the tetramer. Each RuvB hexamer is contacted by two RuvA subunits (via domain III) on 2 adjacent RuvB subunits; this complex drives branch migration. In the full resolvosome a probable DNA-RuvA(4)-RuvB(12)-RuvC(2) complex forms which resolves the HJ.

It localises to the cytoplasm. Functionally, the RuvA-RuvB-RuvC complex processes Holliday junction (HJ) DNA during genetic recombination and DNA repair, while the RuvA-RuvB complex plays an important role in the rescue of blocked DNA replication forks via replication fork reversal (RFR). RuvA specifically binds to HJ cruciform DNA, conferring on it an open structure. The RuvB hexamer acts as an ATP-dependent pump, pulling dsDNA into and through the RuvAB complex. HJ branch migration allows RuvC to scan DNA until it finds its consensus sequence, where it cleaves and resolves the cruciform DNA. This Wolinella succinogenes (strain ATCC 29543 / DSM 1740 / CCUG 13145 / JCM 31913 / LMG 7466 / NCTC 11488 / FDC 602W) (Vibrio succinogenes) protein is Holliday junction branch migration complex subunit RuvA.